An 838-amino-acid polypeptide reads, in one-letter code: RNA-binding protein 25 (838 aa).

The interval 1-30 (MSFPPHLNRPPMGIPALPPGIPPPQFPGFP) is disordered. Residues 12-30 (MGIPALPPGIPPPQFPGFP) show a composition bias toward pro residues. The RRM domain occupies 87 to 164 (TTVFVGNISE…KKLLVKVDAK (78 aa)). Lys-135 is modified (N6-acetyllysine). Disordered regions lie at residues 173–201 (KAKK…ETKR) and 220–242 (ELNA…KKED). Phosphoserine occurs at positions 225 and 228. Glycyl lysine isopeptide (Lys-Gly) (interchain with G-Cter in SUMO2) cross-links involve residues Lys-260, Lys-272, and Lys-425. 2 stretches are compositionally biased toward basic and acidic residues: residues 282-428 (KFRD…KRDR) and 516-568 (RLRD…ERRR). Disordered stretches follow at residues 282–437 (KFRD…DAYE) and 493–683 (EFLE…KRKK). The interval 284 to 639 (RDTHKKLEEE…PNTPGDESPC (356 aa)) is necessary for nuclear speckle localization. Residue Lys-573 forms a Glycyl lysine isopeptide (Lys-Gly) (interchain with G-Cter in SUMO2) linkage. Ser-578 carries the phosphoserine modification. Residues 585 to 594 (KQEKEEKREE) are compositionally biased toward basic and acidic residues. Positions 616–625 (SSAPSVSSAS) are enriched in low complexity. Lys-666 participates in a covalent cross-link: Glycyl lysine isopeptide (Lys-Gly) (interchain with G-Cter in SUMO2). Positions 669–678 (ASNSPGQPNS) are enriched in polar residues. Phosphoserine occurs at positions 672 and 678. Residues Lys-683 and Lys-692 each participate in a glycyl lysine isopeptide (Lys-Gly) (interchain with G-Cter in SUMO2) cross-link. The residue at position 698 (Ser-698) is a Phosphoserine. Residue Lys-717 forms a Glycyl lysine isopeptide (Lys-Gly) (interchain with G-Cter in SUMO2) linkage. The PWI domain occupies 745–838 (PELFAYPLDW…TEAKKIGLVK (94 aa)).

Interacts with LUC7L3 and SRRM1. Specifically associates with functional splicing complexes, including Sm proteins and U1, U2, U4, U5 and U6 snRNAs. Associates with exon junction complex (EJC) proteins, including APEX1, DDX39B, NCBP1, RBM8A and RNPS1. Interaction with NCBP1 is RNA-dependent. In terms of processing, sumoylated.

It localises to the nucleus speckle. It is found in the cytoplasm. In terms of biological role, RNA-binding protein that acts as a regulator of alternative pre-mRNA splicing. Involved in apoptotic cell death through the regulation of the apoptotic factor BCL2L1 isoform expression. Modulates the ratio of proapoptotic BCL2L1 isoform S to antiapoptotic BCL2L1 isoform L mRNA expression. When overexpressed, stimulates proapoptotic BCL2L1 isoform S 5'-splice site (5'-ss) selection, whereas its depletion caused the accumulation of antiapoptotic BCL2L1 isoform L. Promotes BCL2L1 isoform S 5'-ss usage through the 5'-CGGGCA-3' RNA sequence. Its association with LUC7L3 promotes U1 snRNP binding to a weak 5' ss in a 5'-CGGGCA-3'-dependent manner. Binds to the exonic splicing enhancer 5'-CGGGCA-3' RNA sequence located within exon 2 of the BCL2L1 pre-mRNA. In Mus musculus (Mouse), this protein is RNA-binding protein 25 (Rbm25).